Consider the following 178-residue polypeptide: Large ribosomal subunit protein uL6 (178 aa).

The protein belongs to the universal ribosomal protein uL6 family. In terms of assembly, part of the 50S ribosomal subunit.

In terms of biological role, this protein binds to the 23S rRNA, and is important in its secondary structure. It is located near the subunit interface in the base of the L7/L12 stalk, and near the tRNA binding site of the peptidyltransferase center. The sequence is that of Large ribosomal subunit protein uL6 from Desulfatibacillum aliphaticivorans.